The following is a 468-amino-acid chain: MSSGKIAQVIGPVVDVAFAAGDKLPEINNALVVYKNDEKKSKIVLEVALELGDGVVRTIAMESTDGLTRGLEVLDTGRPISVPVGKETLGRVFNVLGDTIDLDAPFPADAERQPIHKKAPTFDELSTSSEILETGIKVIDLLAPYLKGGKVGLFGGAGVGKTVLIQELIHNIAQEHGGISVFTGVGERTREGNDLYWEMKESGVIEKTAMVFGQMNEPPGARMRVALTGLTIAEYFRDVEGQDVLLFIDNIFRFTQAGSEVSALLGRMPSAVGYQPTLATEMGQLQERITSTKKGSVTSIQAIYVPADDYTDPAPATAFAHLDSTTNLERKLVQLGIYPAVDPLASSSRALSPEIVGEEHYAVAAEVKRVLQRYHELQDIIAILGMDELSDDEKTLVARARRIQFFLSQNFNVAEQFTGQPGSYVPVAETVRGFKEILEGKHDKLPEDAFRGVGSIEDVLAKAEKMGF.

Position 155 to 162 (155 to 162) interacts with ATP; that stretch reads GGAGVGKT.

It belongs to the ATPase alpha/beta chains family. In terms of assembly, F-type ATPases have 2 components, CF(1) - the catalytic core - and CF(0) - the membrane proton channel. CF(1) has five subunits: alpha(3), beta(3), gamma(1), delta(1), epsilon(1). CF(0) has three main subunits: a(1), b(2) and c(9-12). The alpha and beta chains form an alternating ring which encloses part of the gamma chain. CF(1) is attached to CF(0) by a central stalk formed by the gamma and epsilon chains, while a peripheral stalk is formed by the delta and b chains.

The protein resides in the cell membrane. It carries out the reaction ATP + H2O + 4 H(+)(in) = ADP + phosphate + 5 H(+)(out). Functionally, produces ATP from ADP in the presence of a proton gradient across the membrane. The catalytic sites are hosted primarily by the beta subunits. The polypeptide is ATP synthase subunit beta (Streptococcus sanguinis (strain SK36)).